Reading from the N-terminus, the 60-residue chain is Metallothionein A (60 aa).

The interval 1 to 28 is beta; that stretch reads MDPCQCSKSGTCNCGGSCTCTNCSCKSC. 20 residues coordinate a divalent metal cation: Cys4, Cys6, Cys12, Cys14, Cys18, Cys20, Cys23, Cys25, Cys28, Cys32, Cys33, Cys35, Cys36, Cys40, Cys43, Cys47, Cys49, Cys54, Cys58, and Cys59. The interval 29-60 is alpha; it reads KKSCCPCCPSGCTKCASGCVCKGKTCDTSCCQ.

It belongs to the metallothionein superfamily. Type 1 family.

In terms of biological role, metallothioneins have a high content of cysteine residues that bind various heavy metals. This chain is Metallothionein A (mta), found in Trematomus bernacchii (Emerald rockcod).